A 115-amino-acid polypeptide reads, in one-letter code: Ribonuclease P protein component (115 aa).

This sequence belongs to the RnpA family. In terms of assembly, consists of a catalytic RNA component (M1 or rnpB) and a protein subunit.

The enzyme catalyses Endonucleolytic cleavage of RNA, removing 5'-extranucleotides from tRNA precursor.. In terms of biological role, RNaseP catalyzes the removal of the 5'-leader sequence from pre-tRNA to produce the mature 5'-terminus. It can also cleave other RNA substrates such as 4.5S RNA. The protein component plays an auxiliary but essential role in vivo by binding to the 5'-leader sequence and broadening the substrate specificity of the ribozyme. The chain is Ribonuclease P protein component from Bacillus cereus (strain ATCC 10987 / NRS 248).